The following is a 130-amino-acid chain: TGSCCGPTFSSLSCGGGCLQPCCYRDPCCCRPVSSTQTVSRPVTFVSRCTRPICEPCRRPVCCDPCSLQEGCCRPITCCPTSCQAVVCRPCCWATTCCQPVSVQCPCCRPTSCPSAPRTTCRTFRTSPCC.

Wool.

Its function is as follows. The keratin products of mammalian epidermal derivatives such as wool and hair consist of microfibrils embedded in a rigid matrix of other proteins. The matrix proteins include the high-sulfur and high-tyrosine keratins, having molecular weights of 6-20 kDa, whereas the microfibrils contain the larger, low-sulfur keratins (40-56 kDa). This chain is Keratin, high-sulfur matrix protein, IIIA3A, found in Ovis aries (Sheep).